Here is a 724-residue protein sequence, read N- to C-terminus: Phenylalanine ammonia-lyase (724 aa).

Tyr-99 serves as the catalytic Proton donor/acceptor. Positions 204-206 (ASG) form a cross-link, 5-imidazolinone (Ala-Gly). 2,3-didehydroalanine (Ser) is present on Ser-205. (E)-cinnamate is bound by residues Asn-265, Gln-355, Arg-361, Asn-391, Lys-462, Glu-490, and Asn-493.

The protein belongs to the PAL/histidase family. Homotetramer. Post-translationally, contains an active site 4-methylidene-imidazol-5-one (MIO), which is formed autocatalytically by cyclization and dehydration of residues Ala-Ser-Gly.

Its subcellular location is the cytoplasm. The catalysed reaction is L-phenylalanine = (E)-cinnamate + NH4(+). It participates in phenylpropanoid metabolism; trans-cinnamate biosynthesis; trans-cinnamate from L-phenylalanine: step 1/1. Functionally, catalyzes the non-oxidative deamination of L-phenylalanine to form trans-cinnamic acid and a free ammonium ion. Facilitates the commitment step in phenylpropanoid pathways that produce secondary metabolites such as lignins, coumarins and flavonoids. The polypeptide is Phenylalanine ammonia-lyase (Flammulina velutipes (Agaricus velutipes)).